We begin with the raw amino-acid sequence, 263 residues long: Acetylglutamate kinase (263 aa).

Substrate contacts are provided by residues 48–49 (GG), arginine 70, and asparagine 162.

Belongs to the acetylglutamate kinase family. ArgB subfamily.

The protein localises to the cytoplasm. The catalysed reaction is N-acetyl-L-glutamate + ATP = N-acetyl-L-glutamyl 5-phosphate + ADP. Its pathway is amino-acid biosynthesis; L-arginine biosynthesis; N(2)-acetyl-L-ornithine from L-glutamate: step 2/4. Functionally, catalyzes the ATP-dependent phosphorylation of N-acetyl-L-glutamate. In Vibrio vulnificus (strain YJ016), this protein is Acetylglutamate kinase.